Here is a 194-residue protein sequence, read N- to C-terminus: Dof zinc finger protein DOF4.2 (194 aa).

The segment at 21–75 (RVCPRCYSDQTRFSYFNNNKKSQPRYKCKNCCRCWTHGGVLRNIPVTGICDKSNL) adopts a Dof-type zinc-finger fold. 4 residues coordinate Zn(2+): Cys23, Cys26, Cys48, and Cys51.

It localises to the nucleus. Transcription factor that binds specifically to a 5'-AA[AG]G-3' consensus core sequence. The polypeptide is Dof zinc finger protein DOF4.2 (DOF4.2) (Arabidopsis thaliana (Mouse-ear cress)).